The following is a 134-amino-acid chain: Small ribosomal subunit protein uS11 (134 aa).

Positions 114 to 134 (TPVPHNGTRPPRKWFKRQEKR) are disordered. A compositionally biased stretch (basic residues) spans 123 to 134 (PPRKWFKRQEKR).

It belongs to the universal ribosomal protein uS11 family. In terms of assembly, part of the 30S ribosomal subunit. Interacts with proteins S7 and S18. Binds to IF-3.

Located on the platform of the 30S subunit, it bridges several disparate RNA helices of the 16S rRNA. Forms part of the Shine-Dalgarno cleft in the 70S ribosome. The chain is Small ribosomal subunit protein uS11 from Mesomycoplasma hyopneumoniae (strain J / ATCC 25934 / NCTC 10110) (Mycoplasma hyopneumoniae).